We begin with the raw amino-acid sequence, 207 residues long: 2,3-bisphosphoglycerate-dependent phosphoglycerate mutase (207 aa).

Residues 10–17 (RHGQSEWN), 23–24 (TG), Arg62, 89–92 (ERDY), Lys100, 116–117 (RR), and 160–161 (GN) each bind substrate. His11 serves as the catalytic Tele-phosphohistidine intermediate. The active-site Proton donor/acceptor is Glu89.

This sequence belongs to the phosphoglycerate mutase family. BPG-dependent PGAM subfamily. In terms of assembly, homodimer.

The catalysed reaction is (2R)-2-phosphoglycerate = (2R)-3-phosphoglycerate. It participates in carbohydrate degradation; glycolysis; pyruvate from D-glyceraldehyde 3-phosphate: step 3/5. Catalyzes the interconversion of 2-phosphoglycerate and 3-phosphoglycerate. The protein is 2,3-bisphosphoglycerate-dependent phosphoglycerate mutase of Afipia carboxidovorans (strain ATCC 49405 / DSM 1227 / KCTC 32145 / OM5) (Oligotropha carboxidovorans).